We begin with the raw amino-acid sequence, 470 residues long: Cysteine--tRNA ligase (470 aa).

Cysteine 46 is a binding site for Zn(2+). The short motif at 48-58 (PTVYDLAHIGN) is the 'HIGH' region element. Zn(2+)-binding residues include cysteine 230, histidine 255, and glutamate 259. The short motif at 288-292 (KMSKS) is the 'KMSKS' region element. Lysine 291 is an ATP binding site.

Belongs to the class-I aminoacyl-tRNA synthetase family. As to quaternary structure, monomer. It depends on Zn(2+) as a cofactor.

The protein localises to the cytoplasm. It catalyses the reaction tRNA(Cys) + L-cysteine + ATP = L-cysteinyl-tRNA(Cys) + AMP + diphosphate. This is Cysteine--tRNA ligase from Granulibacter bethesdensis (strain ATCC BAA-1260 / CGDNIH1).